Here is a 367-residue protein sequence, read N- to C-terminus: Serine/threonine-protein kinase Sgk2 (367 aa).

Positions 1–28 (MASSPVGVPSPQPSRANGNINLGPSANP) are disordered. At serine 10 the chain carries Phosphoserine. A compositionally biased stretch (polar residues) spans 15–28 (RANGNINLGPSANP). One can recognise a Protein kinase domain in the interval 35 to 292 (FDFLKVIGKG…FLDIKNHMFF (258 aa)). ATP contacts are provided by residues 41–49 (IGKGNYGKV) and lysine 64. The short motif at 68-78 (KKSILKNKEQN) is the Nuclear localization signal element. Aspartate 159 acts as the Proton acceptor in catalysis. Position 193 is a phosphothreonine; by PDPK1 (threonine 193). Residues 293–367 (SPINWDDLYH…AQDDDDILDS (75 aa)) form the AGC-kinase C-terminal domain. A phosphoserine mark is found at serine 334 and serine 356. Tyrosine 357 bears the Phosphotyrosine mark.

Belongs to the protein kinase superfamily. AGC Ser/Thr protein kinase family. In terms of processing, activated by phosphorylation on Ser-356 by an unknown kinase (may be mTORC2 but not confirmed), transforming it into a substrate for PDPK1 which then phosphorylates it on Thr-193.

It localises to the cytoplasm. It is found in the nucleus. It catalyses the reaction L-seryl-[protein] + ATP = O-phospho-L-seryl-[protein] + ADP + H(+). The catalysed reaction is L-threonyl-[protein] + ATP = O-phospho-L-threonyl-[protein] + ADP + H(+). Its activity is regulated as follows. Two specific sites, one in the kinase domain (Thr-193) and the other in the C-terminal regulatory region (Ser-356), need to be phosphorylated for its full activation. Functionally, serine/threonine-protein kinase which is involved in the regulation of a wide variety of ion channels, membrane transporters, cell growth, survival and proliferation. Up-regulates Na(+) channels: SCNN1A/ENAC, K(+) channels: KCNA3/Kv1.3, KCNE1 and KCNQ1, amino acid transporter: SLC6A19, glutamate transporter: SLC1A6/EAAT4, glutamate receptors: GRIA1/GLUR1 and GRIK2/GLUR6, Na(+)/H(+) exchanger: SLC9A3/NHE3, and the Na(+)/K(+) ATPase. The chain is Serine/threonine-protein kinase Sgk2 (Sgk2) from Mus musculus (Mouse).